The sequence spans 67 residues: Large ribosomal subunit protein bL35 (67 aa).

Residues 1–16 show a composition bias toward basic residues; sequence MPKMKTKSGAKKRFRV. The disordered stretch occupies residues 1–25; that stretch reads MPKMKTKSGAKKRFRVRPGGTVKRG.

This sequence belongs to the bacterial ribosomal protein bL35 family.

The polypeptide is Large ribosomal subunit protein bL35 (Polaromonas sp. (strain JS666 / ATCC BAA-500)).